A 436-amino-acid chain; its full sequence is MQPVVETLSGLERRVDLAVSVAEVEKEVQAQLKRVGRTAKVAGFRPGKAPLAMLERSHGPGIRYDVINSLVGRAFEQAVDGAKLRVAGSPTLTPKTEGVADDTLAFTATFEVYPEVTVPDLSALAVTRYDTPVTDAEVNQTLDVLRKQRAKFETREGRASQDGDRVVLDFAGTIDGVPFEGGKAEDFPFVLGQGRMLPEFEEAALGLKAGESKVFPLKFPDDYQGKEVAGKTAEFTVTVKEVAEGVLPEVDAEFAKSLGQAEGDVEKLKADIRTNIEREVKARLQGRTKGSVMDALVEAGKFDVPKALVDSDVEGRIAAAREELKQRGVPNADSVPMPAEVFSTESERRVRLGLLVSELVKQAQLQAKPEQVRARIEEFAQNYEQPAQVVSYYLADRQRRAEIEAIVLEDNVVAHVLENAKVADEKVPFDQLMGMA.

Residues Gly163–Pro248 form the PPIase FKBP-type domain.

The protein belongs to the FKBP-type PPIase family. Tig subfamily.

The protein localises to the cytoplasm. The catalysed reaction is [protein]-peptidylproline (omega=180) = [protein]-peptidylproline (omega=0). Functionally, involved in protein export. Acts as a chaperone by maintaining the newly synthesized protein in an open conformation. Functions as a peptidyl-prolyl cis-trans isomerase. This chain is Trigger factor, found in Bordetella parapertussis (strain 12822 / ATCC BAA-587 / NCTC 13253).